A 490-amino-acid chain; its full sequence is Protein twist (490 aa).

3 disordered regions span residues 48–74 (QLQH…QHTQ), 98–167 (PSNE…TGGS), and 330–359 (LDGS…ETDE). Positions 54 to 64 (QHLHSHQHHQQ) are enriched in basic residues. 2 stretches are compositionally biased toward low complexity: residues 65-74 (HQQQQQQHTQ) and 104-135 (STSS…NNPS). Basic residues predominate over residues 339-351 (AFRKPRRRLKRKP). A bHLH domain is found at 362-413 (NQRVMANVRERQRTQSLNDAFKSLQQIIPTLPSDKLSKIQTLKLATRYIDFL).

Efficient DNA binding requires dimerization with another bHLH protein. Homodimer.

It localises to the nucleus. In terms of biological role, involved in the establishment and dorsoventral patterning of germ layers in the embryo. The sequence is that of Protein twist from Drosophila erecta (Fruit fly).